A 632-amino-acid chain; its full sequence is Extracellular metalloproteinase 1 (632 aa).

The N-terminal stretch at 1-19 is a signal peptide; that stretch reads MHGLLLAAGLLSLPLRVLA. Positions 20–243 are excised as a propeptide; it reads HPQPSTSLTS…VHNVVDYVSH (224 aa). N-linked (GlcNAc...) asparagine glycosylation occurs at Asn-284. His-427 lines the Zn(2+) pocket. Glu-428 is an active-site residue. His-431 lines the Zn(2+) pocket. Asn-591 and Asn-620 each carry an N-linked (GlcNAc...) asparagine glycan.

The protein belongs to the peptidase M36 family. It depends on Zn(2+) as a cofactor.

Its subcellular location is the secreted. Its function is as follows. Secreted metalloproteinase that allows assimilation of proteinaceous substrates and probably acts as a virulence factor. The polypeptide is Extracellular metalloproteinase 1 (MEP1) (Arthroderma gypseum (strain ATCC MYA-4604 / CBS 118893) (Microsporum gypseum)).